A 762-amino-acid polypeptide reads, in one-letter code: Proline-rich receptor-like protein kinase PERK10 (762 aa).

The tract at residues M1–S322 is disordered. At M1–A328 the chain is on the extracellular side. A compositionally biased stretch (low complexity) spans S13–L23. The N-linked (GlcNAc...) asparagine glycan is linked to N37. The segment covering P41–P57 has biased composition (low complexity). 3 stretches are compositionally biased toward pro residues: residues S60–P210, P231–P246, and H254–L275. The span at P276–P305 shows a compositional bias: low complexity. N278 and N319 each carry an N-linked (GlcNAc...) asparagine glycan. The chain crosses the membrane as a helical span at residues A329–V349. Over C350–L762 the chain is Cytoplasmic. The disordered stretch occupies residues T370–G410. Over residues M372–E407 the composition is skewed to polar residues. The region spanning F430–L706 is the Protein kinase domain. Residues L436 to V444 and K458 contribute to the ATP site. The active-site Proton acceptor is the D554.

The protein belongs to the protein kinase superfamily. Ser/Thr protein kinase family. In terms of assembly, interacts with KIPK1 and KIPK2 (via its cytosolic domain). As to expression, mostly expressed in inflorescence bolts and flower buds, and, to a lower extent, in roots, seedlings, leaves and siliques.

Its subcellular location is the cell membrane. The enzyme catalyses L-seryl-[protein] + ATP = O-phospho-L-seryl-[protein] + ADP + H(+). The catalysed reaction is L-threonyl-[protein] + ATP = O-phospho-L-threonyl-[protein] + ADP + H(+). Could be involved in the negative regulation of root growth. The sequence is that of Proline-rich receptor-like protein kinase PERK10 (PERK10) from Arabidopsis thaliana (Mouse-ear cress).